The chain runs to 511 residues: 2-methylbutanal oxime monooxygenase (511 aa).

2 helical membrane-spanning segments follow: residues 10–30 (PPQW…LLLF) and 304–324 (ILMN…TWAF). C451 is a heme binding site.

Belongs to the cytochrome P450 family. Heme is required as a cofactor. In terms of tissue distribution, expressed in storage roots, primary roots, petioles and vascular tissues. Expressed in the outer cortex cells, the endodermis and around the xylem, phloem cells and laticifers.

It is found in the microsome membrane. The catalysed reaction is (1E,2S)-2-methylbutanal oxime + reduced [NADPH--hemoprotein reductase] + O2 = 2-hydroxy-2-methylbutanenitrile + oxidized [NADPH--hemoprotein reductase] + 2 H2O + H(+). It carries out the reaction (E)-2-methylpropanal oxime + reduced [NADPH--hemoprotein reductase] + O2 = 2-hydroxy-2-methylpropanenitrile + oxidized [NADPH--hemoprotein reductase] + 2 H2O + H(+). Catalyzes the conversion of (E)-2-methylpropanal oxime (valox) to 2-hydroxy-2-methylpropanenitrile (acetone cyanohydrin) and of (E)-2-methylbutanal oxime (ilox) to 2-hydroxy-2-methylbutyronitrile. The reaction takes place in three steps. First, the oxime is isomerized to the (Z)- isomer, next the (Z)-isomer is dehydrated to the corresponding nitrile, followed by a C-hydroxylation of the nitrile. Can use both aliphatic and aromatic oximes as substrates. The protein is 2-methylbutanal oxime monooxygenase (CYP71E7) of Manihot esculenta (Cassava).